The sequence spans 728 residues: Putative auxin response factor 20 (728 aa).

Positions 119–233 form a DNA-binding region, TF-B3 1; it reads FFEKQLSPAD…ELLVGVRRAP (115 aa). 2 stretches are compositionally biased toward low complexity: residues 665 to 689 and 700 to 712; these read PQGS…TTSA and ASSS…IIPS. Residues 665 to 728 are disordered; sequence PQGSDEEAAA…IVNPRDGSQG (64 aa).

The protein belongs to the ARF family. In terms of assembly, homo and heterodimers.

Its subcellular location is the nucleus. Functionally, auxin response factors (ARFs) are transcriptional factors that bind specifically to the DNA sequence 5'-TGTCTC-3' found in the auxin-responsive promoter elements (AuxREs). The chain is Putative auxin response factor 20 (ARF20) from Oryza sativa subsp. japonica (Rice).